Consider the following 248-residue polypeptide: Ribosomal RNA small subunit methyltransferase A (248 aa).

Residues histidine 11, leucine 13, glycine 38, glutamate 60, aspartate 83, and asparagine 101 each coordinate S-adenosyl-L-methionine.

This sequence belongs to the class I-like SAM-binding methyltransferase superfamily. rRNA adenine N(6)-methyltransferase family. RsmA subfamily.

The protein resides in the cytoplasm. The catalysed reaction is adenosine(1518)/adenosine(1519) in 16S rRNA + 4 S-adenosyl-L-methionine = N(6)-dimethyladenosine(1518)/N(6)-dimethyladenosine(1519) in 16S rRNA + 4 S-adenosyl-L-homocysteine + 4 H(+). In terms of biological role, specifically dimethylates two adjacent adenosines (A1518 and A1519) in the loop of a conserved hairpin near the 3'-end of 16S rRNA in the 30S particle. May play a critical role in biogenesis of 30S subunits. This chain is Ribosomal RNA small subunit methyltransferase A, found in Aquifex aeolicus (strain VF5).